Here is a 658-residue protein sequence, read N- to C-terminus: DNA-binding protein Rfx5 (658 aa).

The span at Met-1–Ser-10 shows a compositional bias: basic and acidic residues. The tract at residues Met-1–Thr-28 is disordered. Ala-2 is subject to N-acetylalanine. Ser-10 is modified (phosphoserine). The segment at Gly-24–Met-89 is N-terminal domain. A leucine-rich region; critical for dimer formation and for interaction with RFXAP region spans residues Leu-61–Leu-65. The RFX-type winged-helix DNA-binding region spans Ala-91–Thr-167. A PxLPxI/L motif; mediates interaction with RFXANK motif is present at residues Pro-172–Leu-177. Residue Ser-184 is modified to Phosphoserine. Disordered regions lie at residues Leu-250–Pro-315, Ala-382–Ala-422, Val-443–Pro-602, and Lys-624–Pro-658. Over residues Gly-277–Val-309 the composition is skewed to basic and acidic residues. 2 stretches are compositionally biased toward gly residues: residues Ala-382–Pro-398 and Pro-406–Ala-422. Basic and acidic residues-rich tracts occupy residues Pro-465–Ala-476 and Pro-489–Gln-498. Positions Lys-506–Pro-516 are enriched in basic residues. Residues Pro-648 to Pro-658 are compositionally biased toward basic and acidic residues.

This sequence belongs to the RFX family. As to quaternary structure, homodimer. The RFX heterotetrameric complex consists of 2 molecules of RFX5 and one each of RFXAP and RFX-B/RFXANK; with each subunit representing a separate complementation group. Interacts (via PxLPxI/L motif) with RFXANK (via ankyrin repeats); the interaction is direct. RFX forms cooperative DNA binding complexes with X2BP and CBF/NF-Y. RFX associates with CIITA to form an active transcriptional complex. Post-translationally, phosphorylated.

Its subcellular location is the nucleus. In terms of biological role, activates transcription from class II MHC promoters. Recognizes X-boxes. Mediates cooperative binding between RFX and NF-Y. RFX binds the X1 box of MHC-II promoters. This chain is DNA-binding protein Rfx5 (Rfx5), found in Mus musculus (Mouse).